We begin with the raw amino-acid sequence, 478 residues long: Serine hydroxymethyltransferase, cytosolic (478 aa).

At Lys251 the chain carries N6-(pyridoxal phosphate)lysine.

This sequence belongs to the SHMT family. Homotetramer. Identified in complex with FAM175B and the other subunits of the BRISC complex, at least composed of FAM175B/ABRO1, BRCC3/BRCC36, BABAM2 and BABAM1/NBA1. Requires pyridoxal 5'-phosphate as cofactor.

It is found in the cytoplasm. The enzyme catalyses (6R)-5,10-methylene-5,6,7,8-tetrahydrofolate + glycine + H2O = (6S)-5,6,7,8-tetrahydrofolate + L-serine. The protein operates within one-carbon metabolism; tetrahydrofolate interconversion. Its function is as follows. Interconversion of serine and glycine. This is Serine hydroxymethyltransferase, cytosolic (Shmt1) from Mus musculus (Mouse).